Reading from the N-terminus, the 71-residue chain is Exodeoxyribonuclease 7 small subunit (71 aa).

The protein belongs to the XseB family. Heterooligomer composed of large and small subunits.

It is found in the cytoplasm. It carries out the reaction Exonucleolytic cleavage in either 5'- to 3'- or 3'- to 5'-direction to yield nucleoside 5'-phosphates.. Functionally, bidirectionally degrades single-stranded DNA into large acid-insoluble oligonucleotides, which are then degraded further into small acid-soluble oligonucleotides. The sequence is that of Exodeoxyribonuclease 7 small subunit from Clostridium botulinum (strain ATCC 19397 / Type A).